Here is a 209-residue protein sequence, read N- to C-terminus: Probable nicotinate-nucleotide adenylyltransferase (209 aa).

This sequence belongs to the NadD family.

The enzyme catalyses nicotinate beta-D-ribonucleotide + ATP + H(+) = deamido-NAD(+) + diphosphate. It participates in cofactor biosynthesis; NAD(+) biosynthesis; deamido-NAD(+) from nicotinate D-ribonucleotide: step 1/1. In terms of biological role, catalyzes the reversible adenylation of nicotinate mononucleotide (NaMN) to nicotinic acid adenine dinucleotide (NaAD). The chain is Probable nicotinate-nucleotide adenylyltransferase from Streptococcus pneumoniae serotype 4 (strain ATCC BAA-334 / TIGR4).